Here is a 284-residue protein sequence, read N- to C-terminus: Prolyl 4-hydroxylase subunit alpha (284 aa).

The 116-residue stretch at 169 to 284 folds into the Fe2OG dioxygenase domain; sequence NFNSIKTQTQ…PRIAITTWIY (116 aa). Fe cation contacts are provided by H191, D193, and H266. Residue R276 coordinates 2-oxoglutarate.

The protein belongs to the P4HA family. As to quaternary structure, heterotetramer of two alpha-1 chains and two beta chains (the beta chain is the multi-functional PDI). Fe(2+) serves as cofactor. The cofactor is L-ascorbate.

The protein resides in the cytoplasm. The catalysed reaction is L-prolyl-[Skp1 protein] + 2-oxoglutarate + O2 = trans-4-hydroxy-L-prolyl-[Skp1 protein] + succinate + CO2. Inhibited by the prolyl-hydroxylase inhibitors alpha,alpha'-dipyridyl and ethyl 3,4-dihydroxybenzoate. Functionally, catalyzes the post-translational formation of 4-hydroxyproline. Probably hydroxylates skp1 on Pro-143. The protein is Prolyl 4-hydroxylase subunit alpha (phyA) of Dictyostelium discoideum (Social amoeba).